The following is a 93-amino-acid chain: Small ribosomal subunit protein uS19 (93 aa).

It belongs to the universal ribosomal protein uS19 family.

Its function is as follows. Protein S19 forms a complex with S13 that binds strongly to the 16S ribosomal RNA. This chain is Small ribosomal subunit protein uS19, found in Parafrankia sp. (strain EAN1pec).